The chain runs to 260 residues: Thiamine thiazole synthase (260 aa).

NAD(+) is bound by residues Ala-36, 55–56 (EQ), Gly-63, and 154–156 (HVD). Residues Asp-156 and His-171 each coordinate Fe cation. Met-224 serves as a coordination point for NAD(+). Arg-234 contributes to the glycine binding site.

Belongs to the THI4 family. In terms of assembly, homooctamer; tetramer of dimers. Fe(2+) is required as a cofactor.

The enzyme catalyses hydrogen sulfide + glycine + NAD(+) = ADP-5-ethyl-4-methylthiazole-2-carboxylate + nicotinamide + 3 H2O + H(+). It participates in cofactor biosynthesis; thiamine diphosphate biosynthesis. In terms of biological role, involved in the biosynthesis of the thiazole moiety of thiamine. Catalyzes the conversion of NAD and glycine to adenosine diphosphate 5-(2-hydroxyethyl)-4-methylthiazole-2-carboxylate (ADT), an adenylated thiazole intermediate, using free sulfide as a source of sulfur. The sequence is that of Thiamine thiazole synthase from Methanosarcina mazei (strain ATCC BAA-159 / DSM 3647 / Goe1 / Go1 / JCM 11833 / OCM 88) (Methanosarcina frisia).